The chain runs to 139 residues: Transthyretin-like protein 5 (139 aa).

An N-terminal signal peptide occupies residues 1–15 (MKLIILLCLVASSYA).

Belongs to the nematode transthyretin-like family.

The protein resides in the secreted. This is Transthyretin-like protein 5 (ttr-5) from Caenorhabditis elegans.